The following is a 143-amino-acid chain: Putative cytokinin riboside 5'-monophosphate phosphoribohydrolase LOG9 (143 aa).

Substrate is bound by residues 23 to 24 (RK), 41 to 47 (RYETMEE), and Thr-53.

The protein belongs to the LOG family.

The catalysed reaction is N(6)-(dimethylallyl)adenosine 5'-phosphate + H2O = N(6)-dimethylallyladenine + D-ribose 5-phosphate. The enzyme catalyses 9-ribosyl-trans-zeatin 5'-phosphate + H2O = trans-zeatin + D-ribose 5-phosphate. Cytokinin-activating enzyme working in the direct activation pathway. Phosphoribohydrolase that converts inactive cytokinin nucleotides to the biologically active free-base forms. The polypeptide is Putative cytokinin riboside 5'-monophosphate phosphoribohydrolase LOG9 (LOG9) (Arabidopsis thaliana (Mouse-ear cress)).